The sequence spans 2731 residues: Teneurin-m (2731 aa).

Disordered regions lie at residues 1–60 and 103–136; these read MNPY…QNQQ and LLEG…NNPN. The Cytoplasmic segment spans residues 1–229; it reads MNPYEYESTL…RKDLVARCSS (229 aa). Residues 110–119 are compositionally biased toward pro residues; the sequence is TAPPDVPPRN. Residues 120 to 136 are compositionally biased toward polar residues; that stretch reads PTMSRMQNGRLTVNNPN. Residues 230–250 form a helical membrane-spanning segment; it reads PWFGIGSISVLFAFVVMLILL. At 251–2731 the chain is on the extracellular side; sequence TTTGVIKWNQ…RQLKFGELSA (2481 aa). The interval 321–387 is disordered; that stretch reads SSAATVTTAT…RTFPARSFPP (67 aa). The span at 322-370 shows a compositional bias: low complexity; that stretch reads SAATVTTATSNSGTAQGLQSTSASAEATSSAATSSSQSSLTPSLSSSLA. EGF-like domains lie at 536–572, 574–606, 643–676, and 738–774; these read GGDD…KECS, RHDE…KFCE, DALQ…DDCS, and TIEG…PDCG. Disulfide bonds link Cys540–Cys549, Cys545–Cys560, Cys562–Cys571, Cys578–Cys589, Cys583–Cys594, Cys596–Cys605, Cys651–Cys664, Cys666–Cys675, Cys742–Cys752, Cys746–Cys762, and Cys764–Cys773. Asn857 carries an N-linked (GlcNAc...) asparagine glycan. 4 NHL repeats span residues 1160–1201, 1202–1246, 1391–1434, and 1459–1502; these read ECPD…IMTD, GSIR…VRDT, STAY…VRVI, and CFEA…VMSS. Residues 1618-1652 form a YD repeat; that stretch reads TGLLRTKLDSTGRSYVYNYDEFGRLTSAVTPTGRV. A disordered region spans residues 2691–2731; the sequence is LADDPGNVAFQRDAKRKRRKTGSSHRSASNRRQLKFGELSA. The span at 2704 to 2724 shows a compositional bias: basic residues; the sequence is AKRKRRKTGSSHRSASNRRQL.

This sequence belongs to the tenascin family. Teneurin subfamily. As to quaternary structure, homodimer. Heterodimer with Ten-a. Interacts with Ten-a; the interaction occurs at the neuromuscular junction. Interacts with alpha-Spec and cher. In terms of processing, phosphorylated. Phosphorylation occurs at tyrosine residues. Proteolytically cleaved. As to expression, expressed in muscles and motor neurons (at protein level).

The protein localises to the cytoplasm. It is found in the postsynaptic cell membrane. The protein resides in the synapse. Its subcellular location is the synaptosome. It localises to the membrane. Involved in neural development, regulating the establishment of proper connectivity within the nervous system. Acts as a homophilic and heterophilic synaptic cell adhesion molecule that drives synapse assembly. Promotes bi-directional trans-synaptic signaling with Ten-a to organize neuromuscular synapses. Functions in olfactory synaptic partner matching by promoting homophilic cell adhesion between pre-synaptic olfactory receptor neurons (ORN) axons and post-synaptic projection neurons (PN) dendrites partner in the developing antennal lobe to form stable connections. Also required for peripheral axon growth cone guidance and target recognition of motor neurons. The protein is Teneurin-m (Ten-m) of Drosophila melanogaster (Fruit fly).